A 312-amino-acid polypeptide reads, in one-letter code: Aspartate carbamoyltransferase catalytic subunit (312 aa).

Carbamoyl phosphate-binding residues include arginine 55 and threonine 56. Lysine 83 contacts L-aspartate. The carbamoyl phosphate site is built by arginine 105, histidine 133, and glutamine 136. L-aspartate contacts are provided by arginine 166 and arginine 220. Positions 261 and 262 each coordinate carbamoyl phosphate.

The protein belongs to the aspartate/ornithine carbamoyltransferase superfamily. ATCase family. In terms of assembly, heterododecamer (2C3:3R2) of six catalytic PyrB chains organized as two trimers (C3), and six regulatory PyrI chains organized as three dimers (R2).

The catalysed reaction is carbamoyl phosphate + L-aspartate = N-carbamoyl-L-aspartate + phosphate + H(+). Its pathway is pyrimidine metabolism; UMP biosynthesis via de novo pathway; (S)-dihydroorotate from bicarbonate: step 2/3. Functionally, catalyzes the condensation of carbamoyl phosphate and aspartate to form carbamoyl aspartate and inorganic phosphate, the committed step in the de novo pyrimidine nucleotide biosynthesis pathway. The protein is Aspartate carbamoyltransferase catalytic subunit of Prosthecochloris aestuarii (strain DSM 271 / SK 413).